A 387-amino-acid chain; its full sequence is TPR repeat-containing protein SYNPCC7002_A0425 (387 aa).

TPR repeat units follow at residues 63 to 96 (LNAL…EANN), 97 to 130 (ARIH…EDDN), 132 to 164 (EFFN…QPNN), 166 to 198 (AYSL…DSNN), 200 to 232 (MALQ…RPND), 233 to 266 (AELR…STRD), 267 to 300 (SAMQ…DPQS), 302 to 334 (EAFA…SPTD), and 336 to 368 (AAFY…YQQR).

The polypeptide is TPR repeat-containing protein SYNPCC7002_A0425 (Picosynechococcus sp. (strain ATCC 27264 / PCC 7002 / PR-6) (Agmenellum quadruplicatum)).